Reading from the N-terminus, the 495-residue chain is Probable cytosol aminopeptidase (495 aa).

Mn(2+)-binding residues include Lys-266 and Asp-271. Lys-278 is a catalytic residue. The Mn(2+) site is built by Asp-289, Asp-348, and Glu-350. The active site involves Arg-352.

Belongs to the peptidase M17 family. Mn(2+) serves as cofactor.

The protein localises to the cytoplasm. The catalysed reaction is Release of an N-terminal amino acid, Xaa-|-Yaa-, in which Xaa is preferably Leu, but may be other amino acids including Pro although not Arg or Lys, and Yaa may be Pro. Amino acid amides and methyl esters are also readily hydrolyzed, but rates on arylamides are exceedingly low.. It catalyses the reaction Release of an N-terminal amino acid, preferentially leucine, but not glutamic or aspartic acids.. In terms of biological role, presumably involved in the processing and regular turnover of intracellular proteins. Catalyzes the removal of unsubstituted N-terminal amino acids from various peptides. This chain is Probable cytosol aminopeptidase, found in Pseudomonas paraeruginosa (strain DSM 24068 / PA7) (Pseudomonas aeruginosa (strain PA7)).